The following is a 432-amino-acid chain: MTLWVLGLNHQTAPVDLRERAAFAGDALPRALESLRALPQVSEAALLSTCNRTELYAMADEARSLVNWLETHAPGLSGYLYQHQEAEAVRHLFRVATGLDSMVLGEPQILGQVKDAWAVARAHGALGSGLDRLFQQTFSVAKRARTDTRVGANPVSVASTAVRLAQESFARLNESTVLLIGAGETIELAAKHLSESRVRRLLIANRTLAHAQTLASQHGGYALPLTDLERHLAEADVVFSATAAREPLVTRVQVEQALRARKRKPMLLFDLAVPRDIEASVDELSDAYLYTVDDLERAVEDNRRGRREAADQAEAIIDLQVARYVETLQATTRQAPLKRLRAFGDSTRDELLAKARQQLHNGKPTDEVLEQLAHALTNRLLHPPTAALRDAALNNDLELTTAADRLFPEKPGYQHPPIATPIVRTDDADPAP.

Residues 49–52 (TCNR), S101, 106–108 (EPQ), and Q112 contribute to the substrate site. C50 serves as the catalytic Nucleophile. Residue 181 to 186 (GAGETI) participates in NADP(+) binding. The tract at residues 407–432 (FPEKPGYQHPPIATPIVRTDDADPAP) is disordered.

Belongs to the glutamyl-tRNA reductase family. Homodimer.

It catalyses the reaction (S)-4-amino-5-oxopentanoate + tRNA(Glu) + NADP(+) = L-glutamyl-tRNA(Glu) + NADPH + H(+). It functions in the pathway porphyrin-containing compound metabolism; protoporphyrin-IX biosynthesis; 5-aminolevulinate from L-glutamyl-tRNA(Glu): step 1/2. Its function is as follows. Catalyzes the NADPH-dependent reduction of glutamyl-tRNA(Glu) to glutamate 1-semialdehyde (GSA). This Xanthomonas oryzae pv. oryzae (strain MAFF 311018) protein is Glutamyl-tRNA reductase.